Here is a 479-residue protein sequence, read N- to C-terminus: Cardiolipin synthase A (479 aa).

Helical transmembrane passes span 8-28 (LLAY…IHAV) and 38-58 (IAWA…YLIF). PLD phosphodiesterase domains lie at 218 to 245 (VNFR…GDEY) and 392 to 419 (TPGF…DNRS). Residues H223, K225, D230, H397, K399, and D404 contribute to the active site.

The protein belongs to the phospholipase D family. Cardiolipin synthase subfamily. ClsA sub-subfamily.

Its subcellular location is the cell inner membrane. The catalysed reaction is 2 a 1,2-diacyl-sn-glycero-3-phospho-(1'-sn-glycerol) = a cardiolipin + glycerol. In terms of biological role, catalyzes the reversible phosphatidyl group transfer from one phosphatidylglycerol molecule to another to form cardiolipin (CL) (diphosphatidylglycerol) and glycerol. The sequence is that of Cardiolipin synthase A from Pseudomonas fluorescens (strain SBW25).